A 299-amino-acid chain; its full sequence is 6-phosphogluconate dehydrogenase, NAD(+)-dependent, decarboxylating (299 aa).

NAD(+)-binding positions include 7 to 12 (GLGRMG), 67 to 69 (VPA), and asparagine 95. The substrate site is built by asparagine 95, serine 118, and glycine 120. The active-site Proton acceptor is the lysine 169. Residue 172–173 (HN) coordinates substrate. Glutamate 176 acts as the Proton donor in catalysis. Positions 177 and 268 each coordinate substrate.

It belongs to the 6-phosphogluconate dehydrogenase family. Homotetramer.

It carries out the reaction 6-phospho-D-gluconate + NAD(+) = D-ribulose 5-phosphate + CO2 + NADH. It functions in the pathway carbohydrate degradation; pentose phosphate pathway. Its function is as follows. Catalyzes the oxidative decarboxylation of 6-phosphogluconate to ribulose 5-phosphate and CO(2), with concomitant reduction of NAD to NADH. This Haloferax volcanii (strain ATCC 29605 / DSM 3757 / JCM 8879 / NBRC 14742 / NCIMB 2012 / VKM B-1768 / DS2) (Halobacterium volcanii) protein is 6-phosphogluconate dehydrogenase, NAD(+)-dependent, decarboxylating.